The chain runs to 220 residues: Ribonuclease HII (220 aa).

The 189-residue stretch at 32–220 (KHIAGIDEAG…FAPIKGCFDC (189 aa)) folds into the RNase H type-2 domain. A divalent metal cation-binding residues include Asp38, Glu39, and Asp130.

It belongs to the RNase HII family. Requires Mn(2+) as cofactor. Mg(2+) serves as cofactor.

It is found in the cytoplasm. The catalysed reaction is Endonucleolytic cleavage to 5'-phosphomonoester.. Endonuclease that specifically degrades the RNA of RNA-DNA hybrids. The sequence is that of Ribonuclease HII from Brucella abortus (strain 2308).